Consider the following 401-residue polypeptide: Argininosuccinate synthase (401 aa).

8-16 (AYSGGLDTT) provides a ligand contact to ATP. Y87 serves as a coordination point for L-citrulline. G117 serves as a coordination point for ATP. 3 residues coordinate L-aspartate: T119, N123, and D124. N123 is a binding site for L-citrulline. L-citrulline contacts are provided by R127, S175, E259, and Y271.

Belongs to the argininosuccinate synthase family. Type 1 subfamily. Homotetramer.

It is found in the cytoplasm. The enzyme catalyses L-citrulline + L-aspartate + ATP = 2-(N(omega)-L-arginino)succinate + AMP + diphosphate + H(+). The protein operates within amino-acid biosynthesis; L-arginine biosynthesis; L-arginine from L-ornithine and carbamoyl phosphate: step 2/3. The chain is Argininosuccinate synthase from Corynebacterium glutamicum (strain ATCC 13032 / DSM 20300 / JCM 1318 / BCRC 11384 / CCUG 27702 / LMG 3730 / NBRC 12168 / NCIMB 10025 / NRRL B-2784 / 534).